Reading from the N-terminus, the 629-residue chain is Keratin, type II cytoskeletal 3 (629 aa).

The head stretch occupies residues 1-182; sequence MNRQVCKTSG…DPQIGQVRAQ (182 aa). Residues Ser-13 and Ser-62 each carry the phosphoserine modification. Residues 183–218 are coil 1A; the sequence is EREQIKTLNNKFASFIDKVRFLEQQNKVLETKWELL. The IF rod domain occupies 183–498; sequence EREQIKTLNN…KLLEGEESRM (316 aa). Residues 219–239 are linker 1; the sequence is QRQGPNSVTGTNNLEPLFENR. Residues 240 to 331 are coil 1B; sequence INYLRSYLDS…TLYDAELSQM (92 aa). Lys-281 carries the post-translational modification N6,N6-dimethyllysine. The tract at residues 332–355 is linker 12; that stretch reads QSHVSDMSVVLSMDNNRSLDLDSI. Ser-349 carries the post-translational modification Phosphoserine. Positions 356–494 are coil 2; sequence IAEVRAQYED…ATYRKLLEGE (139 aa). Residues 495-629 are tail; sequence ESRMSGECQS…FSQSSQRYSR (135 aa). Residues 603 to 629 form a disordered region; the sequence is SGGGFSSGSSSRGSSVKFSQSSQRYSR. A compositionally biased stretch (polar residues) spans 618–629; the sequence is VKFSQSSQRYSR.

It belongs to the intermediate filament family. In terms of assembly, heterotetramer of two type I and two type II keratins. Keratin-3 associates with keratin-12. In terms of tissue distribution, cornea specific. Expressed in the basal cells of corneal epithelium and stroma. Also expressed in esophageal epithelium.

The chain is Keratin, type II cytoskeletal 3 (KRT3) from Oryctolagus cuniculus (Rabbit).